Reading from the N-terminus, the 353-residue chain is 2-Hydroxyacid oxidase 2 (353 aa).

One can recognise an FMN hydroxy acid dehydrogenase domain in the interval 2 to 353 (PLVCLTDFRE…NQDLIQFSRL (352 aa)). Residues 77–79 (PTG), serine 106, and glutamine 128 each bind FMN. Position 130 (tyrosine 130) interacts with a 2-oxocarboxylate. Threonine 156 serves as a coordination point for FMN. An a 2-oxocarboxylate-binding site is contributed by arginine 165. Lysine 224 contributes to the FMN binding site. Histidine 248 serves as the catalytic Proton acceptor. Arginine 251 provides a ligand contact to a 2-oxocarboxylate. Residues 279 to 283 (DGGIR) and 302 to 303 (GR) each bind FMN. Residues 351 to 353 (SRL) carry the Microbody targeting signal motif.

It belongs to the FMN-dependent alpha-hydroxy acid dehydrogenase family. In terms of assembly, homotetramer. The cofactor is FMN.

The protein resides in the peroxisome. It carries out the reaction a (2S)-2-hydroxycarboxylate + O2 = a 2-oxocarboxylate + H2O2. The enzyme catalyses 2-hydroxyhexadecanoate + O2 = 2-oxohexadecanoate + H2O2. The catalysed reaction is 2-hydroxyoctanoate + O2 = 2-oxooctanoate + H2O2. Its pathway is lipid metabolism; fatty acid metabolism. In terms of biological role, oxidase that catalyzes the oxidation of medium and long chain hydroxyacids such as 2-hydroxyhexadecanoate and 2-hydroxyoctanoate, to the correspondong 2-oxoacids. Its role in the oxidation of 2-hydroxy fatty acids may contribute to the general pathway of fatty acid alpha-oxidation. Active in vitro with the artificial electron acceptor 2,6-dichlorophenolindophenol (DCIP), but O2 is believed to be the physiological electron acceptor, leading to the production of H2O2. The chain is 2-Hydroxyacid oxidase 2 (HAO2) from Bos taurus (Bovine).